We begin with the raw amino-acid sequence, 197 residues long: RNA chaperone ProQ (197 aa).

Residues R115–E138 are disordered. The segment covering A117 to A131 has biased composition (basic residues).

The protein belongs to the ProQ family.

The protein resides in the cytoplasm. RNA chaperone with significant RNA binding, RNA strand exchange and RNA duplexing activities. This Haemophilus influenzae (strain ATCC 51907 / DSM 11121 / KW20 / Rd) protein is RNA chaperone ProQ.